We begin with the raw amino-acid sequence, 386 residues long: Succinate--CoA ligase [ADP-forming] subunit beta (386 aa).

One can recognise an ATP-grasp domain in the interval 9-244 (KDLLTAYQLP…PSQENIRDVL (236 aa)). ATP-binding positions include lysine 46, 53-55 (GRG), valine 102, and glutamate 107. 2 residues coordinate Mg(2+): asparagine 199 and aspartate 213. Residues asparagine 264 and 321–323 (GIM) each bind substrate.

The protein belongs to the succinate/malate CoA ligase beta subunit family. In terms of assembly, heterotetramer of two alpha and two beta subunits. It depends on Mg(2+) as a cofactor.

The catalysed reaction is succinate + ATP + CoA = succinyl-CoA + ADP + phosphate. The enzyme catalyses GTP + succinate + CoA = succinyl-CoA + GDP + phosphate. It participates in carbohydrate metabolism; tricarboxylic acid cycle; succinate from succinyl-CoA (ligase route): step 1/1. In terms of biological role, succinyl-CoA synthetase functions in the citric acid cycle (TCA), coupling the hydrolysis of succinyl-CoA to the synthesis of either ATP or GTP and thus represents the only step of substrate-level phosphorylation in the TCA. The beta subunit provides nucleotide specificity of the enzyme and binds the substrate succinate, while the binding sites for coenzyme A and phosphate are found in the alpha subunit. The protein is Succinate--CoA ligase [ADP-forming] subunit beta of Chlamydia trachomatis serovar A (strain ATCC VR-571B / DSM 19440 / HAR-13).